Reading from the N-terminus, the 42-residue chain is Photosystem I reaction center subunit IX (42 aa).

Residues 7–27 traverse the membrane as a helical segment; that stretch reads YLSVAPVLSTLWFVALAGLLI.

It belongs to the PsaJ family.

Its subcellular location is the plastid. It is found in the chloroplast thylakoid membrane. In terms of biological role, may help in the organization of the PsaE and PsaF subunits. This Atropa belladonna (Belladonna) protein is Photosystem I reaction center subunit IX.